The chain runs to 156 residues: Ribosomal RNA large subunit methyltransferase H (156 aa).

Residues Leu-72 and Gly-104 each contribute to the S-adenosyl-L-methionine site.

Belongs to the RNA methyltransferase RlmH family. In terms of assembly, homodimer.

It localises to the cytoplasm. It carries out the reaction pseudouridine(1915) in 23S rRNA + S-adenosyl-L-methionine = N(3)-methylpseudouridine(1915) in 23S rRNA + S-adenosyl-L-homocysteine + H(+). Its function is as follows. Specifically methylates the pseudouridine at position 1915 (m3Psi1915) in 23S rRNA. The polypeptide is Ribosomal RNA large subunit methyltransferase H (Maricaulis maris (strain MCS10) (Caulobacter maris)).